The primary structure comprises 428 residues: AP-1 complex subunit mu-2 (428 aa).

In terms of domain architecture, MHD spans 170-426 (KNEVFLDVIE…ITMAGEYELR (257 aa)).

It belongs to the adaptor complexes medium subunit family. Adaptor protein complex 1 (AP-1) is a heterotetramer composed of two large adaptins (gamma-type subunit and beta-type subunit), a medium adaptin (mu-type subunit) and a small adaptin (sigma-type subunit). As to expression, ubiquitous.

The protein resides in the golgi apparatus. Its subcellular location is the trans-Golgi network membrane. The protein localises to the early endosome membrane. It localises to the cytoplasmic vesicle. It is found in the clathrin-coated vesicle membrane. Its function is as follows. Subunit of clathrin-associated adaptor protein complex 1 that plays a role in protein sorting at the trans-Golgi network and early endosomes (TGN/EE). The AP complexes mediate the recruitment of clathrin to membranes and the recognition of sorting signals within the cytosolic tails of transmembrane cargo molecules. Required for KNOLLE localization at the cell plate to mediate cytokinesis. Functions redundantly with AP1M1 in multiple post-Golgi trafficking pathways leading from the TGN to the vacuole, the plasma membrane, and the cell-division plane. This is AP-1 complex subunit mu-2 (AP1M2) from Arabidopsis thaliana (Mouse-ear cress).